The following is a 384-amino-acid chain: S-adenosylmethionine synthase (384 aa).

Residue histidine 15 coordinates ATP. Aspartate 17 serves as a coordination point for Mg(2+). Residue glutamate 43 participates in K(+) binding. Glutamate 56 and glutamine 99 together coordinate L-methionine. Residues glutamine 99–arginine 109 are flexible loop. Residues aspartate 164 to lysine 166, arginine 230 to phenylalanine 231, aspartate 239, arginine 245 to lysine 246, alanine 262, and lysine 266 each bind ATP. Position 239 (aspartate 239) interacts with L-methionine. Lysine 270 contacts L-methionine.

It belongs to the AdoMet synthase family. Homotetramer; dimer of dimers. Mg(2+) serves as cofactor. The cofactor is K(+).

It localises to the cytoplasm. The enzyme catalyses L-methionine + ATP + H2O = S-adenosyl-L-methionine + phosphate + diphosphate. It functions in the pathway amino-acid biosynthesis; S-adenosyl-L-methionine biosynthesis; S-adenosyl-L-methionine from L-methionine: step 1/1. Functionally, catalyzes the formation of S-adenosylmethionine (AdoMet) from methionine and ATP. The overall synthetic reaction is composed of two sequential steps, AdoMet formation and the subsequent tripolyphosphate hydrolysis which occurs prior to release of AdoMet from the enzyme. The polypeptide is S-adenosylmethionine synthase (Salmonella heidelberg (strain SL476)).